The sequence spans 371 residues: Aminomethyltransferase (371 aa).

This sequence belongs to the GcvT family. The glycine cleavage system is composed of four proteins: P, T, L and H.

The enzyme catalyses N(6)-[(R)-S(8)-aminomethyldihydrolipoyl]-L-lysyl-[protein] + (6S)-5,6,7,8-tetrahydrofolate = N(6)-[(R)-dihydrolipoyl]-L-lysyl-[protein] + (6R)-5,10-methylene-5,6,7,8-tetrahydrofolate + NH4(+). Functionally, the glycine cleavage system catalyzes the degradation of glycine. This Leptospira interrogans serogroup Icterohaemorrhagiae serovar Lai (strain 56601) protein is Aminomethyltransferase.